The sequence spans 378 residues: Lysocardiolipin acyltransferase 1 (378 aa).

2 helical membrane-spanning segments follow: residues 9–29 and 46–66; these read FVVA…GPFL and IVAT…GAKV. Positions 85–90 match the HXXXXD motif motif; the sequence is HRTRMD. 2 consecutive transmembrane segments (helical) span residues 302–322 and 336–358; these read LRVL…PMGT and FAAM…LIEL.

The protein belongs to the 1-acyl-sn-glycerol-3-phosphate acyltransferase family.

It is found in the endoplasmic reticulum membrane. It carries out the reaction a 1-acyl-sn-glycero-3-phosphate + an acyl-CoA = a 1,2-diacyl-sn-glycero-3-phosphate + CoA. It catalyses the reaction a 1-acyl-sn-glycero-3-phospho-(1D-myo-inositol) + an acyl-CoA = a 1,2-diacyl-sn-glycero-3-phospho-(1D-myo-inositol) + CoA. The catalysed reaction is 1-acyl-sn-glycero-3-phospho-(1'-sn-glycerol) + an acyl-CoA = a 1,2-diacyl-sn-glycero-3-phospho-(1'-sn-glycerol) + CoA. The enzyme catalyses 1-hexadecanoyl-sn-glycero-3-phosphate + (9Z)-octadecenoyl-CoA = 1-hexadecanoyl-2-(9Z-octadecenoyl)-sn-glycero-3-phosphate + CoA. It carries out the reaction 1-(9Z-octadecenoyl)-sn-glycero-3-phosphate + (9Z)-octadecenoyl-CoA = 1,2-di-(9Z-octadecenoyl)-sn-glycero-3-phosphate + CoA. It catalyses the reaction 1-(9Z,12Z)-octadecadienoyl-sn-glycero-3-phosphate + (9Z)-octadecenoyl-CoA = 1-(9Z,12Z)-octadecadienoyl-2-(9Z)-octadecenoyl-sn-glycero-3-phosphate + CoA. The catalysed reaction is 1-(9Z,12Z,15Z)-octadecatrienoyl-sn-glycero-3-phosphate + (9Z)-octadecenoyl-CoA = 1-(9Z,12Z,15Z)-octadecatrienoyl-2-(9Z)-octadecenoyl-sn-glycero-3-phosphate + CoA. The enzyme catalyses 1-(9Z-octadecenoyl)-sn-glycero-3-phosphate + hexadecanoyl-CoA = 1-(9Z)-octadecenoyl-2-hexadecanoyl-sn-glycero-3-phosphate + CoA. It carries out the reaction 1-(9Z-octadecenoyl)-sn-glycero-3-phosphate + octadecanoyl-CoA = 1-(9Z-octadecenoyl)-2-octadecanoyl-sn-glycero-3-phosphate + CoA. It catalyses the reaction 1-acyl-sn-glycero-3-phospho-(1'-sn-glycerol) + (9Z)-octadecenoyl-CoA = 1-acyl-2-(9Z-octadecenoyl)-sn-glycero-3-phospho-(1'-sn-glycerol) + CoA. The catalysed reaction is a 1-acyl-sn-glycero-3-phospho-(1D-myo-inositol) + (9Z)-octadecenoyl-CoA = a 1-acyl-2-(9Z-octadecenoyl)-sn-glycero-3-phospho-(1D-myo-inositol) + CoA. The enzyme catalyses 1-hexadecanoyl-sn-glycero-3-phospho-(1D-myo-inositol) + hexadecanoyl-CoA = 1,2-dihexadecanoyl-sn-glycero-3-phospho-(1D-myo-inositol) + CoA. It carries out the reaction 1-hexadecanoyl-sn-glycero-3-phospho-(1D-myo-inositol) + octadecanoyl-CoA = 1-hexadecanoyl-2-octadecanoyl-sn-glycero-3-phospho-(1D-myo-inositol) + CoA. It catalyses the reaction 1-hexadecanoyl-sn-glycero-3-phospho-(1D-myo-inositol) + (9Z)-octadecenoyl-CoA = 1-hexadecanoyl-2-(9Z-octadecenoyl)-sn-glycero-3-phospho-(1D-myo-inositol) + CoA. The catalysed reaction is 1-hexadecanoyl-sn-glycero-3-phospho-(1D-myo-inositol) + (9Z,12Z)-octadecadienoyl-CoA = 1-hexadecanoyl-2-(9Z,12Z-octadecadienoyl)-sn-glycero-3-phospho-(1D-myo-inositol) + CoA. The enzyme catalyses 1-hexadecanoyl-sn-glycero-3-phospho-(1D-myo-inositol) + (5Z,8Z,11Z,14Z)-eicosatetraenoyl-CoA = 1-hexadecanoyl-2-(5Z,8Z,11Z,14Z-eicosatetraenoyl)-sn-glycero-3-phospho-D-myo-inositol + CoA. It carries out the reaction 1-hexadecanoyl-sn-glycero-3-phospho-(1'-sn-glycerol) + hexadecanoyl-CoA = 1,2-dihexadecanoyl-sn-glycero-3-phospho-(1'-sn-glycerol) + CoA. It catalyses the reaction 1-hexadecanoyl-sn-glycero-3-phospho-(1'-sn-glycerol) + octadecanoyl-CoA = 1-hexadecanoyl-2-octadecanoyl-sn-glycero-3-phospho-(1'-sn-glycerol) + CoA. The catalysed reaction is 1-hexadecanoyl-sn-glycero-3-phospho-(1'-sn-glycerol) + (9Z)-octadecenoyl-CoA = 1-hexadecanoyl-2-(9Z-octadecenoyl)-sn-glycero-3-phospho-(1'-sn-glycerol) + CoA. The enzyme catalyses 1-hexadecanoyl-sn-glycero-3-phospho-(1'-sn-glycerol) + (9Z,12Z)-octadecadienoyl-CoA = 1-hexadecanoyl-2-(9Z,12Z-octadecadienoyl)-sn-glycero-3-phospho-(1'-sn-glycerol) + CoA. It carries out the reaction 1-tetradecanoyl-sn-glycero-3-phospho-(1'-sn-glycerol) + (9Z)-octadecenoyl-CoA = 1-tetradecanoyl-2-(9Z-octadecenoyl)-sn-glycero-3-phospho-(1'-sn-glycerol) + CoA. It catalyses the reaction 1-octadecanoyl-sn-glycero-3-phospho-(1'-sn-glycerol) + (9Z)-octadecenoyl-CoA = 1-octadecanoyl-2-(9Z-octadecenoyl)-sn-glycero-3-phospho-(1'-sn-glycerol) + CoA. The catalysed reaction is 1-(9Z-octadecenoyl)-sn-glycero-3-phospho-(1'-sn-glycerol) + (9Z)-octadecenoyl-CoA = 1,2-di-(9Z-octadecenoyl)-sn-glycero-3-phospho-(1'-sn-glycerol) + CoA. The enzyme catalyses 1-hexadecanoyl-sn-glycero-3-phospho-(1D-myo-inositol) + dodecanoyl-CoA = 1-hexadecanoyl-2-dodecanoyl-sn-glycero-3-phospho-(1D-myo-inositol) + CoA. It carries out the reaction 1',3'-bis-[1-acyl-sn-glycero-3-phospho]-glycerol + (9Z)-octadecenoyl-CoA = 1'-[1-acyl-2-(9Z)-octadecenoyl-sn-glycero-3-phospho],3'-[1-acyl,2-hydroxy-sn-glycero-3-phospho]-glycerol + CoA. It catalyses the reaction 1'-[1,2-diacyl-sn-glycero-3-phospho],3'-[1-acyl-sn-glycero-3-phospho]-glycerol + (9Z)-octadecenoyl-CoA = 1'-[1,2-diacyl-sn-glycero-3-phospho],3'-[1-acyl,2-(9Z)-octadecenoyl-sn-glycero-3-phospho]-glycerol + CoA. The catalysed reaction is 1'-[1,2-diacyl-sn-glycero-3-phospho],3'-[1-acyl-sn-glycero-3-phospho]-glycerol + (9Z,12Z)-octadecadienoyl-CoA = 1'-[1,2-diacyl-sn-glycero-3-phospho],3'-[1-acyl,2-(9Z,12Z)-octadecadienoyl-sn-glycero-3-phospho]-glycerol + CoA. The enzyme catalyses 1'-[1,2-diacyl-sn-glycero-3-phospho],3'-[1-acyl-sn-glycero-3-phospho]-glycerol + dodecanoyl-CoA = 1'-[1,2-diacyl-sn-glycero-3-phospho],3'-[1-acyl,2-dodecanoyl-sn-glycero-3-phospho]-glycerol + CoA. It carries out the reaction 1',3'-bis-[1-acyl-sn-glycero-3-phospho]-glycerol + dodecanoyl-CoA = 1'-[1-acyl-2-dodecanoyl-sn-glycero-3-phospho],3'-[1-acyl,2-hydroxy-sn-glycero-3-phospho]-glycerol + CoA. It catalyses the reaction a 1-acyl-sn-glycero-3-phosphate + (9Z)-octadecenoyl-CoA = a 1-acyl-2-(9Z-octadecenoyl)-sn-glycero-3-phosphate + CoA. The catalysed reaction is 1',3'-bis-[1-acyl-sn-glycero-3-phospho]-glycerol + (9Z,12Z)-octadecadienoyl-CoA = 1'-[1-acyl-2-(9Z,12Z)-octadecadienoyl-sn-glycero-3-phospho],3'-[1-acyl,2-hydroxy-sn-glycero-3-phospho]-glycerol + CoA. The enzyme catalyses 1',3'-bis-[1-acyl-sn-glycero-3-phospho]-glycerol + hexadecanoyl-CoA = 1'-[1-acyl-2-hexadecanoyl-sn-glycero-3-phospho],3'-[1-acyl,2-hydroxy-sn-glycero-3-phospho]-glycerol + CoA. It carries out the reaction 1',3'-bis-[1-acyl-sn-glycero-3-phospho]-glycerol + octadecanoyl-CoA = 1'-[1-acyl-2-octadecanoyl-sn-glycero-3-phospho],3'-[1-acyl,2-hydroxy-sn-glycero-3-phospho]-glycerol + CoA. It catalyses the reaction 1'-[1,2-diacyl-sn-glycero-3-phospho],3'-[1-acyl-sn-glycero-3-phospho]-glycerol + octanoyl-CoA = 1'-[1,2-diacyl-sn-glycero-3-phospho],3'-[1-acyl,2-octanoyl-sn-glycero-3-phospho]-glycerol + CoA. The catalysed reaction is 1',3'-bis-[1-acyl-sn-glycero-3-phospho]-glycerol + octanoyl-CoA = 1'-[1-acyl-2-octanoyl-sn-glycero-3-phospho],3'-[1-acyl,2-hydroxy-sn-glycero-3-phospho]-glycerol + CoA. The enzyme catalyses 1'-[1,2-diacyl-sn-glycero-3-phospho],3'-[1-acyl-sn-glycero-3-phospho]-glycerol + hexadecanoyl-CoA = 1'-[1,2-diacyl-sn-glycero-3-phospho],3'-[1-acyl,2-hexadecanoyl-sn-glycero-3-phospho]-glycerol + CoA. It carries out the reaction 1'-[1,2-diacyl-sn-glycero-3-phospho],3'-[1-acyl-sn-glycero-3-phospho]-glycerol + (5Z,8Z,11Z,14Z)-eicosatetraenoyl-CoA = 1'-[1,2-diacyl-sn-glycero-3-phospho],3'-[1-acyl,2-(5Z,8Z,11Z,14Z)-eicosatetraenoyl-sn-glycero-3-phospho]-glycerol + CoA. It catalyses the reaction 1',3'-bis-[1-acyl-sn-glycero-3-phospho]-glycerol + (5Z,8Z,11Z,14Z)-eicosatetraenoyl-CoA = 1'-[1-acyl-2-(5Z,8Z,11Z,14Z)-eicosatetraenoyl-sn-glycero-3-phospho],3'-[1-acyl,2-hydroxy-sn-glycero-3-phospho]-glycerol + CoA. The catalysed reaction is a 1-acyl-sn-glycero-3-phospho-(1D-myo-inositol) + octadecanoyl-CoA = a 1-acyl-2-octadecanoyl-sn-glycero-3-phospho-(1D-myo-inositol) + CoA. The enzyme catalyses a 2-acyl-sn-glycero-3-phospho-D-myo-inositol + octadecanoyl-CoA = 1-octadecanoyl-2-acyl-sn-glycero-3-phospho-1D-myo-inositol + CoA. The protein operates within phospholipid metabolism; CDP-diacylglycerol biosynthesis; CDP-diacylglycerol from sn-glycerol 3-phosphate: step 2/3. Exhibits acyl-CoA:lysocardiolipin acyltransferase (ALCAT) activity; catalyzes the reacylation of lyso-cardiolipin to cardiolipin (CL), a key step in CL remodeling. Recognizes both monolysocardiolipin and dilysocardiolipin as substrates with a preference for linoleoyl-CoA and oleoyl-CoA as acyl donors. Also exhibits 1-acyl-sn-glycerol-3-phosphate acyltransferase activity (AGPAT) activity; converts 1-acyl-sn-glycerol-3- phosphate (lysophosphatidic acid or LPA) into 1,2-diacyl-sn-glycerol-3- phosphate (phosphatidic acid or PA) by incorporating an acyl moiety at the sn-2 position of the glycerol backbone. Possesses both lysophosphatidylinositol acyltransferase (LPIAT) and lysophosphatidylglycerol acyltransferase (LPGAT) activities. Required for establishment of the hematopoietic and endothelial lineages. The polypeptide is Lysocardiolipin acyltransferase 1 (LCLAT1) (Gallus gallus (Chicken)).